Consider the following 100-residue polypeptide: Aspartyl/glutamyl-tRNA(Asn/Gln) amidotransferase subunit C (100 aa).

Belongs to the GatC family. As to quaternary structure, heterotrimer of A, B and C subunits.

It catalyses the reaction L-glutamyl-tRNA(Gln) + L-glutamine + ATP + H2O = L-glutaminyl-tRNA(Gln) + L-glutamate + ADP + phosphate + H(+). It carries out the reaction L-aspartyl-tRNA(Asn) + L-glutamine + ATP + H2O = L-asparaginyl-tRNA(Asn) + L-glutamate + ADP + phosphate + 2 H(+). Allows the formation of correctly charged Asn-tRNA(Asn) or Gln-tRNA(Gln) through the transamidation of misacylated Asp-tRNA(Asn) or Glu-tRNA(Gln) in organisms which lack either or both of asparaginyl-tRNA or glutaminyl-tRNA synthetases. The reaction takes place in the presence of glutamine and ATP through an activated phospho-Asp-tRNA(Asn) or phospho-Glu-tRNA(Gln). The polypeptide is Aspartyl/glutamyl-tRNA(Asn/Gln) amidotransferase subunit C (Streptococcus gordonii (strain Challis / ATCC 35105 / BCRC 15272 / CH1 / DL1 / V288)).